We begin with the raw amino-acid sequence, 155 residues long: Chromosomal passenger complex protein bir-1 (155 aa).

A BIR repeat occupies 20–87; it reads RLMTFKNFEY…KRDEPCEFVR (68 aa). 4 residues coordinate Zn(2+): C57, C60, H76, and C83.

Belongs to the IAP family. Component of the CPC complex which consists of icp-1; csc-1; bir-1 and air-2. Within the complex, interacts with csc-1, icp-1 and air-2. Interacts with csc-1 in a zinc-dependent-manner; the interaction is direct. Expressed in oocytes and sperm.

The protein resides in the chromosome. It localises to the cytoplasm. It is found in the cytoskeleton. Its subcellular location is the spindle. The protein localises to the midbody. Its function is as follows. Component of the chromosomal passenger complex (CPC), a complex that acts as a key regulator of chromosome segregation and cytokinesis. The CPC complex has essential functions at the centromere in ensuring correct chromosome condensation, alignment and segregation. In the complex, required to direct the Aurora B/air-2 kinase to chromosomes. Also functions in spindle midzone formation and in the formation of polar bodies during oogenesis. Required for the localization of the kinetochore component hcp-1 to chromosomes. Involved in the positive regulation of transcription. Involved in the transcriptional regulation of collagen genes. The protein is Chromosomal passenger complex protein bir-1 of Caenorhabditis elegans.